A 271-amino-acid chain; its full sequence is Formamidopyrimidine-DNA glycosylase (271 aa).

P2 functions as the Schiff-base intermediate with DNA in the catalytic mechanism. The Proton donor role is filled by E3. K58 acts as the Proton donor; for beta-elimination activity in catalysis. DNA contacts are provided by H92, R111, and R152. The segment at 237–271 adopts an FPG-type zinc-finger fold; it reads SVYGREGEACKQCGRVLKHATIGQRATVWCGSCQR. R261 serves as the catalytic Proton donor; for delta-elimination activity.

Belongs to the FPG family. As to quaternary structure, monomer. The cofactor is Zn(2+).

The enzyme catalyses Hydrolysis of DNA containing ring-opened 7-methylguanine residues, releasing 2,6-diamino-4-hydroxy-5-(N-methyl)formamidopyrimidine.. The catalysed reaction is 2'-deoxyribonucleotide-(2'-deoxyribose 5'-phosphate)-2'-deoxyribonucleotide-DNA = a 3'-end 2'-deoxyribonucleotide-(2,3-dehydro-2,3-deoxyribose 5'-phosphate)-DNA + a 5'-end 5'-phospho-2'-deoxyribonucleoside-DNA + H(+). In terms of biological role, involved in base excision repair of DNA damaged by oxidation or by mutagenic agents. Acts as a DNA glycosylase that recognizes and removes damaged bases. Has a preference for oxidized purines, such as 7,8-dihydro-8-oxoguanine (8-oxoG). Has AP (apurinic/apyrimidinic) lyase activity and introduces nicks in the DNA strand. Cleaves the DNA backbone by beta-delta elimination to generate a single-strand break at the site of the removed base with both 3'- and 5'-phosphates. This chain is Formamidopyrimidine-DNA glycosylase, found in Xanthomonas euvesicatoria pv. vesicatoria (strain 85-10) (Xanthomonas campestris pv. vesicatoria).